The primary structure comprises 124 residues: Protein ApaG (124 aa).

Residues 1 to 124 (MSRYELTVQV…FALAMPRMLH (124 aa)) form the ApaG domain.

In Ralstonia nicotianae (strain ATCC BAA-1114 / GMI1000) (Ralstonia solanacearum), this protein is Protein ApaG.